The primary structure comprises 262 residues: Octanoyltransferase (262 aa).

Positions 41 to 232 (PQLPDGLLLL…SFCQVFGLQA (192 aa)) constitute a BPL/LPL catalytic domain. Substrate is bound by residues 96-103 (RGGEVTYH), 163-165 (AIG), and 176-178 (GFA). The active-site Acyl-thioester intermediate is the Cys194.

It belongs to the LipB family.

Its subcellular location is the cytoplasm. It carries out the reaction octanoyl-[ACP] + L-lysyl-[protein] = N(6)-octanoyl-L-lysyl-[protein] + holo-[ACP] + H(+). It functions in the pathway protein modification; protein lipoylation via endogenous pathway; protein N(6)-(lipoyl)lysine from octanoyl-[acyl-carrier-protein]: step 1/2. Functionally, catalyzes the transfer of endogenously produced octanoic acid from octanoyl-acyl-carrier-protein onto the lipoyl domains of lipoate-dependent enzymes. Lipoyl-ACP can also act as a substrate although octanoyl-ACP is likely to be the physiological substrate. The sequence is that of Octanoyltransferase from Synechococcus sp. (strain JA-2-3B'a(2-13)) (Cyanobacteria bacterium Yellowstone B-Prime).